A 975-amino-acid chain; its full sequence is Cation-chloride cotransporter 1 (975 aa).

Disordered regions lie at residues Met1–Arg29 and Glu104–His124. Residues Met1–Met132 are Cytoplasmic-facing. A helical membrane pass occupies residues Gly133–Ile153. The Extracellular portion of the chain corresponds to Arg154 to Gly167. A helical transmembrane segment spans residues Leu168–Ile188. The Cytoplasmic portion of the chain corresponds to Ala189–Ser214. Residues Ile215 to Val235 traverse the membrane as a helical segment. At Glu236–Gln273 the chain is on the extracellular side. A glycan (N-linked (GlcNAc...) asparagine) is linked at Asn256. A helical membrane pass occupies residues Val274 to Ile294. Over Asn295 to Arg296 the chain is Cytoplasmic. Residues Val297 to Phe317 traverse the membrane as a helical segment. At Leu318–Thr359 the chain is on the extracellular side. The helical transmembrane segment at Tyr360–Gly380 threads the bilayer. Topologically, residues Ser381–Thr398 are cytoplasmic. Residues Leu399–Val419 form a helical membrane-spanning segment. Over Ala420–Thr434 the chain is Extracellular. Residues Ile435–Ala455 traverse the membrane as a helical segment. Over Leu456–His490 the chain is Cytoplasmic. A helical membrane pass occupies residues Ile491–Leu511. Topologically, residues Ile512 to Thr515 are extracellular. The helical transmembrane segment at Val516–Leu536 threads the bilayer. At Leu537–Pro544 the chain is on the cytoplasmic side. A helical transmembrane segment spans residues Arg545–Met565. Residues Phe566–Ser571 are Extracellular-facing. The chain crosses the membrane as a helical span at residues Phe572–Lys592. Residues Ala593–Thr975 lie on the Cytoplasmic side of the membrane.

Belongs to the SLC12A transporter family. In terms of tissue distribution, expressed in young seedlings cotyledon tips, plant vasculature, root tips and axillary buds. Expressed in root vascular strand in the pericycle and other parenchyma cells bordering xylem vessels. Expressed in the xylem/symplast boundaries of rosette stems, rosette leaves and cauline leaves. Expressed in stipules, trichomes and hydathodes. Expressed in pollen grains.

It localises to the membrane. Functionally, cation/chloride cotransporter that mediates potassium-chloride and sodium-chloride cotransports. Involved in plant development and Cl(-) homeostasis. May be involved in long distance Cl(-) transport. Does not function as an H(+)-dependent cotransporter. The polypeptide is Cation-chloride cotransporter 1 (CCC1) (Arabidopsis thaliana (Mouse-ear cress)).